Here is a 203-residue protein sequence, read N- to C-terminus: Dual-action ribosomal maturation protein DarP (203 aa).

The span at 1 to 13 (MQPMTRNSRNSPG) shows a compositional bias: polar residues. The interval 1-39 (MQPMTRNSRNSPGSRFPGAFAPEPDMDEPKSKSQKKRDM) is disordered. Over residues 27-39 (DEPKSKSQKKRDM) the composition is skewed to basic and acidic residues.

This sequence belongs to the DarP family.

The protein resides in the cytoplasm. Its function is as follows. Member of a network of 50S ribosomal subunit biogenesis factors which assembles along the 30S-50S interface, preventing incorrect 23S rRNA structures from forming. Promotes peptidyl transferase center (PTC) maturation. The chain is Dual-action ribosomal maturation protein DarP from Cupriavidus pinatubonensis (strain JMP 134 / LMG 1197) (Cupriavidus necator (strain JMP 134)).